The following is a 31-amino-acid chain: Cytochrome b6-f complex subunit 6 (31 aa).

The chain crosses the membrane as a helical span at residues 3–23 (IAIDYFLLVGFCFAFTSGLYL).

This sequence belongs to the PetL family. The 4 large subunits of the cytochrome b6-f complex are cytochrome b6, subunit IV (17 kDa polypeptide, PetD), cytochrome f and the Rieske protein, while the 4 small subunits are PetG, PetL, PetM and PetN. The complex functions as a dimer.

It localises to the plastid. Its subcellular location is the chloroplast thylakoid membrane. In terms of biological role, component of the cytochrome b6-f complex, which mediates electron transfer between photosystem II (PSII) and photosystem I (PSI), cyclic electron flow around PSI, and state transitions. PetL is important for photoautotrophic growth as well as for electron transfer efficiency and stability of the cytochrome b6-f complex. The chain is Cytochrome b6-f complex subunit 6 from Trieres chinensis (Marine centric diatom).